The sequence spans 452 residues: Keratin, type II cytoskeletal 80 (452 aa).

The head stretch occupies residues methionine 1–glutamine 82. Residue serine 45 is modified to Phosphoserine. The coil 1A stretch occupies residues glutamine 82–leucine 118. In terms of domain architecture, IF rod spans glutamate 83–methionine 394. Residues glutamine 119 to phenylalanine 135 form a linker 1 region. A coil 1B region spans residues glutamine 136–leucine 227. Residues threonine 228–isoleucine 251 are linker 12. A coil 2 region spans residues valine 252–glutamate 390. The tail stretch occupies residues glutamate 391–glutamate 452. Residues threonine 412 to glutamate 452 form a disordered region. Positions serine 422 to proline 432 are enriched in basic residues. Over residues tyrosine 443 to glutamate 452 the composition is skewed to polar residues.

Belongs to the intermediate filament family. As to quaternary structure, heterotetramer of two type I and two type II keratins.

The polypeptide is Keratin, type II cytoskeletal 80 (Krt80) (Mus musculus (Mouse)).